A 437-amino-acid polypeptide reads, in one-letter code: ATP-dependent RNA helicase RhlB (437 aa).

Positions 9–37 (QKFADLGLKPQVTEGLEKKGFEYCTPIQA) match the Q motif motif. Residues 40–219 (LPVLLTGQDI…FEHMHNPEHV (180 aa)) form the Helicase ATP-binding domain. Position 53-60 (53-60 (AQTGTGKT)) interacts with ATP. Positions 165–168 (DEAD) match the DEAD box motif. The region spanning 245–390 (ALLQTLIEEE…VSDYDASALI (146 aa)) is the Helicase C-terminal domain. Residues 395–437 (APLRMRAPRTQQRRTNTGGTRSGNRKPQGRRPRQPRQSAPKQS) are disordered. A compositionally biased stretch (low complexity) spans 403 to 413 (RTQQRRTNTGG). Over residues 417 to 428 (GNRKPQGRRPRQ) the composition is skewed to basic residues.

It belongs to the DEAD box helicase family. RhlB subfamily. As to quaternary structure, component of the RNA degradosome, which is a multiprotein complex involved in RNA processing and mRNA degradation.

It localises to the cytoplasm. It carries out the reaction ATP + H2O = ADP + phosphate + H(+). DEAD-box RNA helicase involved in RNA degradation. Has RNA-dependent ATPase activity and unwinds double-stranded RNA. This is ATP-dependent RNA helicase RhlB from Vibrio campbellii (strain ATCC BAA-1116).